We begin with the raw amino-acid sequence, 397 residues long: Endoglucanase (397 aa).

The active-site Proton donor is the Glu194. The active-site Nucleophile is the Glu317.

This sequence belongs to the glycosyl hydrolase 5 (cellulase A) family.

The enzyme catalyses Endohydrolysis of (1-&gt;4)-beta-D-glucosidic linkages in cellulose, lichenin and cereal beta-D-glucans.. The protein is Endoglucanase of Paenibacillus polymyxa (Bacillus polymyxa).